Consider the following 548-residue polypeptide: Chaperonin GroEL (548 aa).

Residues 30–33 (TLGP), lysine 51, 87–91 (DGTTT), glycine 415, 479–481 (NAA), and aspartate 495 each bind ATP. The disordered stretch occupies residues 525–548 (PKEDKTSDASSSPAGGMGGMGGMM). Positions 539 to 548 (GGMGGMGGMM) are enriched in gly residues.

Belongs to the chaperonin (HSP60) family. As to quaternary structure, forms a cylinder of 14 subunits composed of two heptameric rings stacked back-to-back. Interacts with the co-chaperonin GroES.

It localises to the cytoplasm. It catalyses the reaction ATP + H2O + a folded polypeptide = ADP + phosphate + an unfolded polypeptide.. In terms of biological role, together with its co-chaperonin GroES, plays an essential role in assisting protein folding. The GroEL-GroES system forms a nano-cage that allows encapsulation of the non-native substrate proteins and provides a physical environment optimized to promote and accelerate protein folding. The protein is Chaperonin GroEL of Buchnera aphidicola subsp. Rhopalosiphum maidis.